A 392-amino-acid polypeptide reads, in one-letter code: ATP phosphoribosyltransferase regulatory subunit (392 aa).

This sequence belongs to the class-II aminoacyl-tRNA synthetase family. HisZ subfamily. In terms of assembly, heteromultimer composed of HisG and HisZ subunits.

Its subcellular location is the cytoplasm. It functions in the pathway amino-acid biosynthesis; L-histidine biosynthesis; L-histidine from 5-phospho-alpha-D-ribose 1-diphosphate: step 1/9. In terms of biological role, required for the first step of histidine biosynthesis. May allow the feedback regulation of ATP phosphoribosyltransferase activity by histidine. The sequence is that of ATP phosphoribosyltransferase regulatory subunit from Marinomonas sp. (strain MWYL1).